A 364-amino-acid polypeptide reads, in one-letter code: DNA polymerase IV (364 aa).

The UmuC domain occupies 6-194 (VFHIDFDYFY…LKIRDIPGIG (189 aa)). Residues D10 and D111 each contribute to the Mg(2+) site. The active site involves E112.

The protein belongs to the DNA polymerase type-Y family. In terms of assembly, monomer. It depends on Mg(2+) as a cofactor.

It localises to the cytoplasm. The catalysed reaction is DNA(n) + a 2'-deoxyribonucleoside 5'-triphosphate = DNA(n+1) + diphosphate. In terms of biological role, poorly processive, error-prone DNA polymerase involved in untargeted mutagenesis. Copies undamaged DNA at stalled replication forks, which arise in vivo from mismatched or misaligned primer ends. These misaligned primers can be extended by PolIV. Exhibits no 3'-5' exonuclease (proofreading) activity. May be involved in translesional synthesis. This is DNA polymerase IV from Nitrosopumilus maritimus (strain SCM1).